The primary structure comprises 199 residues: Imidazoleglycerol-phosphate dehydratase (199 aa).

The protein belongs to the imidazoleglycerol-phosphate dehydratase family.

It is found in the cytoplasm. It carries out the reaction D-erythro-1-(imidazol-4-yl)glycerol 3-phosphate = 3-(imidazol-4-yl)-2-oxopropyl phosphate + H2O. It functions in the pathway amino-acid biosynthesis; L-histidine biosynthesis; L-histidine from 5-phospho-alpha-D-ribose 1-diphosphate: step 6/9. This is Imidazoleglycerol-phosphate dehydratase from Kineococcus radiotolerans (strain ATCC BAA-149 / DSM 14245 / SRS30216).